The primary structure comprises 763 residues: Thyrotropin receptor (763 aa).

Residues 1–21 (MRQTPLLQLALLLSLPRSLGG) form the signal peptide. Topologically, residues 22 to 412 (KGCPSPPCEC…EFNPCEDIMG (391 aa)) are extracellular. Cys-31 and Cys-41 are oxidised to a cystine. N-linked (GlcNAc...) asparagine glycans are attached at residues Asn-77 and Asn-99. 7 LRR repeats span residues 100 to 124 (LSKMTHIEIRNTRSLTYIDPGALKE), 125 to 150 (LPLLKFLGIFNTGLGVFPDLTKVYST), 151 to 174 (DVFFILEITDNPYMTSIPANAFQG), 176 to 199 (CNETLTLKLYNNGFTSIQGHAFNG), 201 to 223 (KLDAVYLNKNKYLTAIDQDAFGG), 225 to 248 (YSGPTLLDVSYTSVTALPSKGLEH), and 264 to 288 (PLTLSFLHLTRADLSYPSHCCAFKN). 2 N-linked (GlcNAc...) asparagine glycosylation sites follow: Asn-177 and Asn-198. Asn-302 carries N-linked (GlcNAc...) asparagine glycosylation. A Sulfotyrosine modification is found at Tyr-384. The chain crosses the membrane as a helical span at residues 413–440 (YKFLRIVVWFVSLLALLGNVFVLIILLT). Topologically, residues 441–449 (SHYKLTVPR) are cytoplasmic. The chain crosses the membrane as a helical span at residues 450–472 (FLMCNLAFADFCMGMYLLLIASV). Residues 473 to 493 (DLYTHSEYYNHAIDWQTGPGC) lie on the Extracellular side of the membrane. The cysteines at positions 493 and 568 are disulfide-linked. The chain crosses the membrane as a helical span at residues 494–516 (NAAGFFTVFASELSVYTLTVITL). Residues 517-536 (ERWYAITFAMRLDRKMRLRH) are Cytoplasmic-facing. The helical transmembrane segment at 537-559 (AYAIMVGGWVCCFLLALLPLVGI) threads the bilayer. Topologically, residues 560-579 (SSYAKVSICLPMDTETPLAL) are extracellular. A helical membrane pass occupies residues 580-601 (AYIILVLLLNIVAFIIVCSCYV). The Cytoplasmic portion of the chain corresponds to 602-624 (KIYITVRNPQYNTGDKDTKIAKR). Residues 625–648 (MAVLIFTDFMCMAPISFYALSALM) form a helical membrane-spanning segment. Over 649–659 (NKPLITVTNSK) the chain is Extracellular. The helical transmembrane segment at 660-681 (ILLVLFYPLNSCANPFLYAIFT) threads the bilayer. Topologically, residues 682 to 763 (KTFQRDVFIL…ISKEYNQTVL (82 aa)) are cytoplasmic. Residues 761-763 (TVL) carry the PDZ-binding motif.

The protein belongs to the G-protein coupled receptor 1 family. FSH/LSH/TSH subfamily. In terms of assembly, interacts with heterodimer GPHA2:GPHB5; this interaction stimulates cAMP production. Interacts (via the PDZ-binding motif) with SCRIB; regulates TSHR trafficking and function. Glycosylated. In terms of processing, sulfated. Sulfation on Tyr-384 plays a role in thyrotropin receptor binding and activation.

It is found in the cell membrane. The protein resides in the basolateral cell membrane. Functionally, receptor for the thyroid-stimulating hormone (TSH) or thyrotropin. Also acts as a receptor for the heterodimeric glycoprotein hormone (GPHA2:GPHB5) or thyrostimulin. The activity of this receptor is mediated by G proteins which activate adenylate cyclase. Plays a central role in controlling thyroid cell metabolism. This Felis catus (Cat) protein is Thyrotropin receptor (TSHR).